Reading from the N-terminus, the 201-residue chain is Large ribosomal subunit protein bL25 (201 aa).

The tract at residues 181-201 (APRESEEEAEEEATETAKESE) is disordered. Positions 185 to 194 (SEEEAEEEAT) are enriched in acidic residues.

It belongs to the bacterial ribosomal protein bL25 family. CTC subfamily. Part of the 50S ribosomal subunit; part of the 5S rRNA/L5/L18/L25 subcomplex. Contacts the 5S rRNA. Binds to the 5S rRNA independently of L5 and L18.

This is one of the proteins that binds to the 5S RNA in the ribosome where it forms part of the central protuberance. The chain is Large ribosomal subunit protein bL25 from Thermoanaerobacter pseudethanolicus (strain ATCC 33223 / 39E) (Clostridium thermohydrosulfuricum).